The primary structure comprises 172 residues: Secretory-abundant heat soluble protein 64681 (172 aa).

The signal sequence occupies residues 1 to 19 (MSRTIVALILLGLAALAAA). An SAHS-c1 region spans residues 30–59 (EWAGKAWLGKWVSTDRSENWDAFVEALGLP). The SAHS-c2 stretch occupies residues 74 to 102 (WKEGDHYHHQIIIADKSYKQDIQFKLGEE). 2 N-linked (GlcNAc...) asparagine glycosylation sites follow: Asn108 and Asn133. The SAHS-c3 stretch occupies residues 115–164 (KYTEVGDNLQNEVKIPSKNKTISDSYVVKGDELEKTYKINDVVAKRWYKK).

It belongs to the Secretory-abundant heat soluble protein (SAHS) family.

The protein resides in the secreted. In terms of biological role, secreted heat soluble protein acting as a molecular shield in water-deficient condition. Tardigrade-specific intrinsically disordered proteins (TDPs) are essential for desiccation tolerance by forming non-crystalline amorphous solids upon desiccation, and this vitrified state mirrors their protective capabilities. In Hypsibius exemplaris (Freshwater tardigrade), this protein is Secretory-abundant heat soluble protein 64681.